The following is an 80-amino-acid chain: UPF0154 protein SH1564 (80 aa).

The helical transmembrane segment at 4–24 (WLAILLIIVALIGGLVGGFFL) threads the bilayer.

Belongs to the UPF0154 family.

Its subcellular location is the membrane. The polypeptide is UPF0154 protein SH1564 (Staphylococcus haemolyticus (strain JCSC1435)).